We begin with the raw amino-acid sequence, 306 residues long: Putative dihydroorotate dehydrogenase A (fumarate) (306 aa).

Residues serine 20 and 44–45 (KG) each bind FMN. Substrate-binding positions include lysine 44 and 68–72 (NSIGL). FMN-binding residues include asparagine 98 and asparagine 126. Asparagine 126 lines the substrate pocket. Cysteine 129 acts as the Nucleophile in catalysis. Positions 164 and 190 each coordinate FMN. 191 to 192 (NT) contributes to the substrate binding site. FMN-binding positions include glycine 216, 244–245 (GG), and 266–267 (GT).

It belongs to the dihydroorotate dehydrogenase family. Type 1 subfamily. As to quaternary structure, homodimer. FMN serves as cofactor.

It is found in the cytoplasm. It catalyses the reaction (S)-dihydroorotate + fumarate = orotate + succinate. The protein operates within pyrimidine metabolism; UMP biosynthesis via de novo pathway. Functionally, catalyzes the conversion of dihydroorotate to orotate with fumarate as the electron acceptor. This Aquifex aeolicus (strain VF5) protein is Putative dihydroorotate dehydrogenase A (fumarate) (pyrD).